The primary structure comprises 267 residues: 22 kDa alpha-zein 14 (267 aa).

The first 21 residues, 1–21, serve as a signal peptide directing secretion; it reads MATKILSLLALLALFASATNA.

It belongs to the zein family.

Its function is as follows. Zeins are major seed storage proteins. In Zea mays (Maize), this protein is 22 kDa alpha-zein 14.